The primary structure comprises 327 residues: NF-kappa-B inhibitor delta (327 aa).

Residues 1 to 40 (MEDSLDTRLYPEPSLSQVGSWRVSSLPSGSPQLPSPTGPS) are disordered. A compositionally biased stretch (polar residues) spans 14–23 (SLSQVGSWRV). ANK repeat units follow at residues 62–97 (EGDTLLHLFAARGLRWAAYAAAEVLQMYRQLDIREH), 98–127 (KGKTPLLVAAAANQPLIVEDLLSLGAEPNA), 131–160 (QGRSVLHVAATYGLPGVLSAVFKSGIQVDL), 166–215 (EGLT…SHTS), 220–250 (SNKTILHLAVQAANPTLVQLLLGLPRGDLRA), and 257–290 (HGNTALHMAAALPPGPPQEAIVRHLLAAGADPTL). Residues 293 to 327 (LENEQPVHLLRPGPGPEGLRQLLKRSRTAPPGLSS) are disordered.

Belongs to the NF-kappa-B inhibitor family. In terms of assembly, interacts with NFKB1, RELA and RELB; in the nucleus. In terms of tissue distribution, specifically expressed in spleen and at low levels in thymus. Expressed in a population of antigen-presenting dendritic cells which may act as regulators of systemic inflammatory response.

Its subcellular location is the nucleus. Regulates the expression of IL-2, IL-6, and other cytokines through regulation on NF-kappa-B activity. Functions in the regulation of inflammatory responses. Involved in the induction of T helper 17 cells (Th17) differentiation upon recognition of antigen by T cell antigen receptor (TCR). According to PubMed:11931770, it may also regulate TCR-induced negative selection of thymocytes. The protein is NF-kappa-B inhibitor delta (Nfkbid) of Mus musculus (Mouse).